The chain runs to 273 residues: 4-hydroxy-tetrahydrodipicolinate reductase (273 aa).

12–17 (GSGGRM) is a binding site for NAD(+). An NADP(+)-binding site is contributed by arginine 39. NAD(+) is bound by residues 102–104 (GTT) and 126–129 (AANF). Residue histidine 159 is the Proton donor/acceptor of the active site. A (S)-2,3,4,5-tetrahydrodipicolinate-binding site is contributed by histidine 160. Lysine 163 functions as the Proton donor in the catalytic mechanism. 169 to 170 (GT) lines the (S)-2,3,4,5-tetrahydrodipicolinate pocket.

Belongs to the DapB family. As to quaternary structure, homotetramer.

It is found in the cytoplasm. The enzyme catalyses (S)-2,3,4,5-tetrahydrodipicolinate + NAD(+) + H2O = (2S,4S)-4-hydroxy-2,3,4,5-tetrahydrodipicolinate + NADH + H(+). It catalyses the reaction (S)-2,3,4,5-tetrahydrodipicolinate + NADP(+) + H2O = (2S,4S)-4-hydroxy-2,3,4,5-tetrahydrodipicolinate + NADPH + H(+). It functions in the pathway amino-acid biosynthesis; L-lysine biosynthesis via DAP pathway; (S)-tetrahydrodipicolinate from L-aspartate: step 4/4. Functionally, catalyzes the conversion of 4-hydroxy-tetrahydrodipicolinate (HTPA) to tetrahydrodipicolinate. This Serratia proteamaculans (strain 568) protein is 4-hydroxy-tetrahydrodipicolinate reductase.